Reading from the N-terminus, the 257-residue chain is DNA repair protein RecO (257 aa).

It belongs to the RecO family.

Involved in DNA repair and RecF pathway recombination. This chain is DNA repair protein RecO, found in Streptococcus thermophilus (strain CNRZ 1066).